The following is a 241-amino-acid chain: Small ribosomal subunit protein uS2 (241 aa).

The protein belongs to the universal ribosomal protein uS2 family.

The polypeptide is Small ribosomal subunit protein uS2 (Glaesserella parasuis serovar 5 (strain SH0165) (Haemophilus parasuis)).